Consider the following 221-residue polypeptide: ATP-dependent dethiobiotin synthetase BioD (221 aa).

11–16 is an ATP binding site; that stretch reads DIGKTL. Mg(2+) is bound at residue Thr15. Lys35 is an active-site residue. Residue Thr39 participates in substrate binding. ATP contacts are provided by residues Asp44 and 103–106; that span reads EGAG. Asp44 and Glu103 together coordinate Mg(2+).

It belongs to the dethiobiotin synthetase family. In terms of assembly, homodimer. It depends on Mg(2+) as a cofactor.

Its subcellular location is the cytoplasm. The enzyme catalyses (7R,8S)-7,8-diammoniononanoate + CO2 + ATP = (4R,5S)-dethiobiotin + ADP + phosphate + 3 H(+). Its pathway is cofactor biosynthesis; biotin biosynthesis; biotin from 7,8-diaminononanoate: step 1/2. Its function is as follows. Catalyzes a mechanistically unusual reaction, the ATP-dependent insertion of CO2 between the N7 and N8 nitrogen atoms of 7,8-diaminopelargonic acid (DAPA, also called 7,8-diammoniononanoate) to form a ureido ring. The protein is ATP-dependent dethiobiotin synthetase BioD of Leptospira borgpetersenii serovar Hardjo-bovis (strain L550).